A 506-amino-acid polypeptide reads, in one-letter code: Ubiquitin carboxyl-terminal hydrolase 22 (506 aa).

The UBP-type zinc finger occupies A4–L121. Zn(2+) is bound by residues C6, H8, C46, C49, C59, C62, C67, H72, H76, H82, C95, and C98. The USP domain occupies R159 to Q501. C168 functions as the Nucleophile in the catalytic mechanism. H460 (proton acceptor) is an active-site residue.

This sequence belongs to the peptidase C19 family. UBP8 subfamily. In terms of assembly, component of some SAGA transcription coactivator-HAT complexes.

The protein resides in the nucleus. It catalyses the reaction Thiol-dependent hydrolysis of ester, thioester, amide, peptide and isopeptide bonds formed by the C-terminal Gly of ubiquitin (a 76-residue protein attached to proteins as an intracellular targeting signal).. Functionally, histone deubiquitinating component of the transcription regulatory histone acetylation (HAT) complex SAGA. Catalyzes the deubiquitination of both histones H2A and H2B, thereby acting as a coactivator. Recruited to specific gene promoters by activators, where it is required for transcription. The sequence is that of Ubiquitin carboxyl-terminal hydrolase 22 (usp22) from Danio rerio (Zebrafish).